An 870-amino-acid chain; its full sequence is Ribonucleoside-diphosphate reductase large subunit (870 aa).

Positions 16-110 constitute an ATP-cone domain; that stretch reads MYVVKRDGTK…VSNLHKQTSK (95 aa). ATP contacts are provided by residues 20-21, 26-32, T71, and D75; these read KR and ENVSFDK. GDP is bound at residue S235. A disulfide bridge connects residues C236 and C463. Residues 244–246, K261, R274, and 281–282 contribute to the dTTP site; these read DSI and RG. N446 is a binding site for GDP. The Proton acceptor role is filled by N446. The active-site Cysteine radical intermediate is C448. GDP is bound by residues E450 and 632–635; that span reads TAST. The active-site Proton acceptor is E450. The segment at 789–854 is disordered; it reads KPVENNINST…NNNEDDLANY (66 aa). Over residues 796–811 the composition is skewed to low complexity; it reads NSTTPLKTPTKTPNSS. Polar residues predominate over residues 812–831; sequence NRISTSPTNNLTSPIRFNIT. Residues 832-844 are compositionally biased toward low complexity; sequence QQQQQQQQQQQQQ.

It belongs to the ribonucleoside diphosphate reductase large chain family. As to quaternary structure, heterodimer of a large and a small subunit.

The protein resides in the cytoplasm. It carries out the reaction a 2'-deoxyribonucleoside 5'-diphosphate + [thioredoxin]-disulfide + H2O = a ribonucleoside 5'-diphosphate + [thioredoxin]-dithiol. Its activity is regulated as follows. Under complex allosteric control mediated by deoxynucleoside triphosphates and ATP binding to separate specificity and activation sites on the large subunit. The type of nucleotide bound at the specificity site determines substrate preference. It seems probable that ATP makes the enzyme reduce CDP and UDP, dGTP favors ADP reduction and dTTP favors GDP reduction. Stimulated by ATP and inhibited by dATP binding to the activity site. Provides the precursors necessary for DNA synthesis. Catalyzes the biosynthesis of deoxyribonucleotides from the corresponding ribonucleotides. The protein is Ribonucleoside-diphosphate reductase large subunit (rnrA) of Dictyostelium discoideum (Social amoeba).